The following is a 419-amino-acid chain: D-amino acid dehydrogenase (419 aa).

FAD is bound at residue 3 to 17 (VLILGGGVVGVTSAY).

It belongs to the DadA oxidoreductase family. Requires FAD as cofactor.

It carries out the reaction a D-alpha-amino acid + A + H2O = a 2-oxocarboxylate + AH2 + NH4(+). Its pathway is amino-acid degradation; D-alanine degradation; NH(3) and pyruvate from D-alanine: step 1/1. In terms of biological role, oxidative deamination of D-amino acids. The protein is D-amino acid dehydrogenase of Methylobacterium radiotolerans (strain ATCC 27329 / DSM 1819 / JCM 2831 / NBRC 15690 / NCIMB 10815 / 0-1).